The sequence spans 349 residues: GTP 3',8-cyclase (349 aa).

The Radical SAM core domain occupies 24–249 (PFGRAVTYLR…KDMSYRTGGP (226 aa)). Arginine 33 provides a ligand contact to GTP. Residues cysteine 40 and cysteine 44 each contribute to the [4Fe-4S] cluster site. Position 46 (tyrosine 46) interacts with S-adenosyl-L-methionine. Cysteine 47 contributes to the [4Fe-4S] cluster binding site. Arginine 82 provides a ligand contact to GTP. S-adenosyl-L-methionine is bound at residue glycine 86. Threonine 116 contacts GTP. Serine 140 is a binding site for S-adenosyl-L-methionine. Lysine 176 is a binding site for GTP. Residue methionine 210 participates in S-adenosyl-L-methionine binding. The [4Fe-4S] cluster site is built by cysteine 273 and cysteine 276. Residue 278-280 (RVR) participates in GTP binding. Cysteine 290 provides a ligand contact to [4Fe-4S] cluster.

It belongs to the radical SAM superfamily. MoaA family. In terms of assembly, monomer and homodimer. It depends on [4Fe-4S] cluster as a cofactor.

It catalyses the reaction GTP + AH2 + S-adenosyl-L-methionine = (8S)-3',8-cyclo-7,8-dihydroguanosine 5'-triphosphate + 5'-deoxyadenosine + L-methionine + A + H(+). It participates in cofactor biosynthesis; molybdopterin biosynthesis. In terms of biological role, catalyzes the cyclization of GTP to (8S)-3',8-cyclo-7,8-dihydroguanosine 5'-triphosphate. The sequence is that of GTP 3',8-cyclase from Sinorhizobium medicae (strain WSM419) (Ensifer medicae).